Here is a 569-residue protein sequence, read N- to C-terminus: Proline--tRNA ligase (569 aa).

This sequence belongs to the class-II aminoacyl-tRNA synthetase family. ProS type 1 subfamily. Homodimer.

Its subcellular location is the cytoplasm. The enzyme catalyses tRNA(Pro) + L-proline + ATP = L-prolyl-tRNA(Pro) + AMP + diphosphate. Catalyzes the attachment of proline to tRNA(Pro) in a two-step reaction: proline is first activated by ATP to form Pro-AMP and then transferred to the acceptor end of tRNA(Pro). As ProRS can inadvertently accommodate and process non-cognate amino acids such as alanine and cysteine, to avoid such errors it has two additional distinct editing activities against alanine. One activity is designated as 'pretransfer' editing and involves the tRNA(Pro)-independent hydrolysis of activated Ala-AMP. The other activity is designated 'posttransfer' editing and involves deacylation of mischarged Ala-tRNA(Pro). The misacylated Cys-tRNA(Pro) is not edited by ProRS. The sequence is that of Proline--tRNA ligase from Nitrosospira multiformis (strain ATCC 25196 / NCIMB 11849 / C 71).